The chain runs to 255 residues: Syntaxin-6 (255 aa).

S2 is subject to N-acetylserine. S2 bears the Phosphoserine mark. Positions 2–112 (SMEDPFFVVK…KDQMSASSVQ (111 aa)) are interaction with BLTP3B. The required for interaction with VPS51 stretch occupies residues 2-168 (SMEDPFFVVK…QAQQQLIVEQ (167 aa)). Topologically, residues 2-234 (SMEDPFFVVK…VSHMTSDRRQ (233 aa)) are cytoplasmic. Residues 41 to 74 (EEIDWTTNELRNNLRSIEWDLEDLDETISIVEAN) adopt a coiled-coil conformation. Residues S129 and S152 each carry the phosphoserine modification. In terms of domain architecture, t-SNARE coiled-coil homology spans 163-225 (QLIVEQQDEQ…DNVMKKLAKV (63 aa)). A helical; Anchor for type IV membrane protein transmembrane segment spans residues 235–255 (WCAIAILFAVLLVVLTLFLVL).

This sequence belongs to the syntaxin family. As to quaternary structure, identified in a complex containing STX6, STX12, VAMP4 and VTI1A. Binds EEA1. Interacts with VPS45A and GOPC. Interacts with MARCHF2; the interaction promotes MARCHF2-mediated ubiquitination and degradation of CFTR. Interacts with MARCHF3. Interacts with BLTP3B (via C-terminal coiled-coil domain). Interacts with BAIAP3; this interaction is increased in the presence of calcium. Interacts (via N-terminus) with VPS51. Interacts with VPS13B. As to expression, widely expressed, with relatively higher expression in brain, lung and kidney.

It is found in the golgi apparatus membrane. The protein localises to the golgi apparatus. It localises to the trans-Golgi network membrane. Its subcellular location is the recycling endosome membrane. Its function is as follows. SNARE promoting movement of transport vesicles to target membranes. Targets endosomes to the trans-Golgi network, and may therefore function in retrograde trafficking. Together with SNARE STX12, promotes movement of vesicles from endosomes to the cell membrane, and may therefore function in the endocytic recycling pathway. The sequence is that of Syntaxin-6 (Stx6) from Rattus norvegicus (Rat).